The following is a 590-amino-acid chain: NADH-ubiquinone oxidoreductase chain 5 (590 aa).

The next 15 helical transmembrane spans lie at 1-21 (MNLI…MSIM), 31-51 (LMVL…NNEL), 77-97 (LLFT…SLWY), 104-124 (INKF…IITA), 130-150 (LFIG…WWHG), 167-187 (IGDI…SINM), 190-210 (LMIQ…AAAT), 230-250 (TPVS…FLLI), 261-281 (IMLT…AAAA), 314-336 (AFLH…GSYI), 355-375 (LPMT…MPFL), 398-418 (IMIT…IMLF), 439-461 (HPLA…STLQ), 466-486 (VTMP…GVLL), and 568-588 (MIKN…LFIM).

This sequence belongs to the complex I subunit 5 family.

It localises to the mitochondrion inner membrane. The enzyme catalyses a ubiquinone + NADH + 5 H(+)(in) = a ubiquinol + NAD(+) + 4 H(+)(out). Core subunit of the mitochondrial membrane respiratory chain NADH dehydrogenase (Complex I) that is believed to belong to the minimal assembly required for catalysis. Complex I functions in the transfer of electrons from NADH to the respiratory chain. The immediate electron acceptor for the enzyme is believed to be ubiquinone. In Lycodon semicarinatus (Ryukyu odd-tooth snake), this protein is NADH-ubiquinone oxidoreductase chain 5 (MT-ND5).